The chain runs to 377 residues: EPS I polysaccharide export outer membrane protein EpsA (377 aa).

A signal peptide spans 1-23; sequence MFVSIPSIRKTVMSLCAVPLMAA. Cys-24 carries N-palmitoyl cysteine lipidation. Cys-24 carries S-diacylglycerol cysteine lipidation.

Belongs to the BexD/CtrA/VexA family.

The protein resides in the cell outer membrane. Probably involved in polymerization and/or export of exopolysaccharide EPS I which functions as a virulence factor. The sequence is that of EPS I polysaccharide export outer membrane protein EpsA (epsA) from Ralstonia solanacearum (Pseudomonas solanacearum).